The sequence spans 351 residues: Deoxyguanosinetriphosphate triphosphohydrolase-like protein (351 aa).

An HD domain is found at 75–196 (RLTHTLEVAE…VRVADIIAYL (122 aa)).

It belongs to the dGTPase family. Type 2 subfamily.

The polypeptide is Deoxyguanosinetriphosphate triphosphohydrolase-like protein (Desulfatibacillum aliphaticivorans).